The following is a 154-amino-acid chain: Ribosome maturation factor RimP (154 aa).

This sequence belongs to the RimP family.

The protein resides in the cytoplasm. Functionally, required for maturation of 30S ribosomal subunits. The protein is Ribosome maturation factor RimP of Thioalkalivibrio sulfidiphilus (strain HL-EbGR7).